The chain runs to 311 residues: Small ribosomal subunit biogenesis GTPase RsgA (311 aa).

The 159-residue stretch at 88 to 246 folds into the CP-type G domain; it reads SKEKEQVIVA…VIDTPGIREF (159 aa). GTP is bound by residues 137 to 140 and 188 to 196; these read NKID and GHSGVGKST. Zn(2+)-binding residues include C270, C275, H277, and C283.

This sequence belongs to the TRAFAC class YlqF/YawG GTPase family. RsgA subfamily. Monomer. Associates with 30S ribosomal subunit, binds 16S rRNA. The cofactor is Zn(2+).

It localises to the cytoplasm. One of several proteins that assist in the late maturation steps of the functional core of the 30S ribosomal subunit. Helps release RbfA from mature subunits. May play a role in the assembly of ribosomal proteins into the subunit. Circularly permuted GTPase that catalyzes slow GTP hydrolysis, GTPase activity is stimulated by the 30S ribosomal subunit. This chain is Small ribosomal subunit biogenesis GTPase RsgA, found in Chlorobaculum tepidum (strain ATCC 49652 / DSM 12025 / NBRC 103806 / TLS) (Chlorobium tepidum).